A 265-amino-acid polypeptide reads, in one-letter code: Undecaprenyl-diphosphatase (265 aa).

A run of 8 helical transmembrane segments spans residues 7–27 (VIVS…PISS), 45–65 (TKIL…YFFH), 86–106 (LHIL…YKKI), 108–128 (LLFN…FLLI), 145–165 (ISLL…YPGF), 186–206 (IEFS…YDFI), 214–234 (ILDL…SILC), and 245–265 (TSLI…YFIN).

This sequence belongs to the UppP family.

The protein resides in the cell membrane. It carries out the reaction di-trans,octa-cis-undecaprenyl diphosphate + H2O = di-trans,octa-cis-undecaprenyl phosphate + phosphate + H(+). Catalyzes the dephosphorylation of undecaprenyl diphosphate (UPP). Confers resistance to bacitracin. This chain is Undecaprenyl-diphosphatase, found in Buchnera aphidicola subsp. Acyrthosiphon pisum (strain 5A).